We begin with the raw amino-acid sequence, 329 residues long: MTDVRFRIIGTGAYVPERIVSNDEVGAPAGVDDDWITRKTGIRQRRWAADDQATSDLATAAGRAALKAAGITPEQLTVIAVATSTPDRPQPPTAAYVQHHLGATGTAAFDVNAVCSGTVFALSSVAGTLVYRGGYALVIGADLYSRILNPADRKTVVLFGDGAGAMVLGPTSTGTGPIVRRVALHTFGGLTDLIRVPAGGSRQPLDTDGLDAGLQYFAMDGREVRRFVTEHLPQLIKGFLHEAGVDAADISHFVPHQANGVMLDEVFGELHLPRATMHRTVETYGNTGAASIPITMDAAVRAGSFRPGELVLLAGFGGGMAASFALIEW.

Residues Cys-115, His-256, and Asn-286 contribute to the active site.

It belongs to the thiolase-like superfamily. FabH family. Homodimer.

It is found in the cytoplasm. The catalysed reaction is malonyl-CoA + acetyl-CoA + H(+) = acetoacetyl-CoA + CO2 + CoA. The protein operates within metabolic intermediate biosynthesis; (R)-mevalonate biosynthesis. Functionally, catalyzes the condensation of acetyl-CoA and malonyl-CoA to form acetoacetyl-CoA and CoA. Does not accept malonyl-[acyl-carrier-protein] as a substrate. Can also convert malonyl-CoA into acetyl-CoA via decarboxylation of malonyl-CoA. In Streptomyces sp. (strain CL190), this protein is Acetoacetyl CoA synthase NphT7 (nphT7).